The primary structure comprises 1122 residues: Breast carcinoma-amplified sequence 3 homolog (1122 aa).

A disordered region spans residues 1 to 41 (MSADSPRRHPSGVVGSGIGLGSGSGTGLGSGSTGGSKSGAA). Residues 14 to 37 (VGSGIGLGSGSGTGLGSGSTGGSK) are compositionally biased toward gly residues. At Ser-55 the chain carries Phosphoserine. Composition is skewed to low complexity over residues 357–377 (GTTA…ASGG), 626–641 (GSNS…SLSD), 966–987 (TKDN…PSSN), and 1036–1051 (LSLE…PLSL). Disordered regions lie at residues 357-382 (GTTA…DAKQ), 620-644 (GVGV…DDSG), 966-990 (TKDN…NKVQ), 1033-1054 (NSRL…LTNG), and 1071-1122 (GVAQ…RRNL). Ser-638 is subject to Phosphoserine. Residues 1087–1112 (VDDDDEEEEEEEEELDEEAEPDDDER) are compositionally biased toward acidic residues. A compositionally biased stretch (basic and acidic residues) spans 1113–1122 (EDRPLGRRNL).

This sequence belongs to the BCAS3 family. Expressed in all postembryonic pericardial cells, but not in cardioblasts. Also expressed in Garland cells in third instar larvae (at protein level).

The protein resides in the cytoplasm. In terms of biological role, regulates macropinocytosis in pericardial cells. The protein is Breast carcinoma-amplified sequence 3 homolog (rudhira) of Drosophila melanogaster (Fruit fly).